The chain runs to 186 residues: MDATVTVVGNLTADPELRYTATGAAVVNMTIASTPRMYDRQSGEWKDGEPLFLRGILWREYAINAAASLAKGMRVVAVGKLKQRNYETREGDRRTSVELEIDEIGPTLRYATAKCSRATQAGHGVSPDPWADSQGSQGIDSHTTRSEEITENAKNGEGAGKNELNKKVLVGDNVSYEDFDSDEVPF.

The region spanning 1-108 is the SSB domain; sequence MDATVTVVGN…LEIDEIGPTL (108 aa). Residues 119-186 form a disordered region; sequence TQAGHGVSPD…EDFDSDEVPF (68 aa). Residues 175 to 186 are compositionally biased toward acidic residues; the sequence is SYEDFDSDEVPF.

Homotetramer.

In Tropheryma whipplei (strain Twist) (Whipple's bacillus), this protein is Single-stranded DNA-binding protein 1 (ssb1).